Consider the following 235-residue polypeptide: Carboxy-S-adenosyl-L-methionine synthase (235 aa).

Residues tyrosine 35, 60–62 (GCS), 83–84 (DN), asparagine 124, and arginine 191 each bind S-adenosyl-L-methionine.

The protein belongs to the class I-like SAM-binding methyltransferase superfamily. Cx-SAM synthase family. In terms of assembly, homodimer.

It catalyses the reaction prephenate + S-adenosyl-L-methionine = carboxy-S-adenosyl-L-methionine + 3-phenylpyruvate + H2O. Functionally, catalyzes the conversion of S-adenosyl-L-methionine (SAM) to carboxy-S-adenosyl-L-methionine (Cx-SAM). In Campylobacter jejuni subsp. jejuni serotype O:6 (strain 81116 / NCTC 11828), this protein is Carboxy-S-adenosyl-L-methionine synthase.